The primary structure comprises 324 residues: Arginase (324 aa).

The Mn(2+) site is built by histidine 115, aspartate 142, histidine 144, and aspartate 146. Residues 144–148 (HTDLH), 155–157 (SGN), and aspartate 196 each bind substrate. Aspartate 244 and aspartate 246 together coordinate Mn(2+). 2 residues coordinate substrate: threonine 258 and glutamate 289.

Belongs to the arginase family. As to quaternary structure, homohexamer. The cofactor is Mn(2+).

The enzyme catalyses L-arginine + H2O = urea + L-ornithine. It functions in the pathway nitrogen metabolism; urea cycle; L-ornithine and urea from L-arginine: step 1/1. The chain is Arginase (arcA) from Agrobacterium fabrum (strain C58 / ATCC 33970) (Agrobacterium tumefaciens (strain C58)).